Reading from the N-terminus, the 316-residue chain is 4-hydroxy-3-methylbut-2-enyl diphosphate reductase (316 aa).

C12 lines the [4Fe-4S] cluster pocket. Positions 43 and 81 each coordinate (2E)-4-hydroxy-3-methylbut-2-enyl diphosphate. Residues H43 and H81 each contribute to the dimethylallyl diphosphate site. Isopentenyl diphosphate is bound by residues H43 and H81. [4Fe-4S] cluster is bound at residue C103. Position 131 (H131) interacts with (2E)-4-hydroxy-3-methylbut-2-enyl diphosphate. H131 contacts dimethylallyl diphosphate. H131 is an isopentenyl diphosphate binding site. E133 (proton donor) is an active-site residue. T170 contributes to the (2E)-4-hydroxy-3-methylbut-2-enyl diphosphate binding site. A [4Fe-4S] cluster-binding site is contributed by C198. Positions 226, 228, and 271 each coordinate (2E)-4-hydroxy-3-methylbut-2-enyl diphosphate. Positions 226, 228, and 271 each coordinate dimethylallyl diphosphate. Residues S226, N228, and S271 each contribute to the isopentenyl diphosphate site.

Belongs to the IspH family. [4Fe-4S] cluster is required as a cofactor.

It catalyses the reaction isopentenyl diphosphate + 2 oxidized [2Fe-2S]-[ferredoxin] + H2O = (2E)-4-hydroxy-3-methylbut-2-enyl diphosphate + 2 reduced [2Fe-2S]-[ferredoxin] + 2 H(+). The enzyme catalyses dimethylallyl diphosphate + 2 oxidized [2Fe-2S]-[ferredoxin] + H2O = (2E)-4-hydroxy-3-methylbut-2-enyl diphosphate + 2 reduced [2Fe-2S]-[ferredoxin] + 2 H(+). Its pathway is isoprenoid biosynthesis; dimethylallyl diphosphate biosynthesis; dimethylallyl diphosphate from (2E)-4-hydroxy-3-methylbutenyl diphosphate: step 1/1. It functions in the pathway isoprenoid biosynthesis; isopentenyl diphosphate biosynthesis via DXP pathway; isopentenyl diphosphate from 1-deoxy-D-xylulose 5-phosphate: step 6/6. Functionally, catalyzes the conversion of 1-hydroxy-2-methyl-2-(E)-butenyl 4-diphosphate (HMBPP) into a mixture of isopentenyl diphosphate (IPP) and dimethylallyl diphosphate (DMAPP). Acts in the terminal step of the DOXP/MEP pathway for isoprenoid precursor biosynthesis. The sequence is that of 4-hydroxy-3-methylbut-2-enyl diphosphate reductase from Geobacillus thermodenitrificans (strain NG80-2).